We begin with the raw amino-acid sequence, 289 residues long: ATP synthase gamma chain (289 aa).

Belongs to the ATPase gamma chain family. As to quaternary structure, F-type ATPases have 2 components, CF(1) - the catalytic core - and CF(0) - the membrane proton channel. CF(1) has five subunits: alpha(3), beta(3), gamma(1), delta(1), epsilon(1). CF(0) has three main subunits: a, b and c.

The protein resides in the cell membrane. Functionally, produces ATP from ADP in the presence of a proton gradient across the membrane. The gamma chain is believed to be important in regulating ATPase activity and the flow of protons through the CF(0) complex. This chain is ATP synthase gamma chain, found in Mycoplasmopsis synoviae (strain 53) (Mycoplasma synoviae).